Here is a 238-residue protein sequence, read N- to C-terminus: 2-C-methyl-D-erythritol 4-phosphate cytidylyltransferase (238 aa).

This sequence belongs to the IspD/TarI cytidylyltransferase family. IspD subfamily.

It catalyses the reaction 2-C-methyl-D-erythritol 4-phosphate + CTP + H(+) = 4-CDP-2-C-methyl-D-erythritol + diphosphate. The protein operates within isoprenoid biosynthesis; isopentenyl diphosphate biosynthesis via DXP pathway; isopentenyl diphosphate from 1-deoxy-D-xylulose 5-phosphate: step 2/6. Catalyzes the formation of 4-diphosphocytidyl-2-C-methyl-D-erythritol from CTP and 2-C-methyl-D-erythritol 4-phosphate (MEP). This chain is 2-C-methyl-D-erythritol 4-phosphate cytidylyltransferase, found in Acinetobacter baumannii (strain SDF).